We begin with the raw amino-acid sequence, 695 residues long: DNA ligase (695 aa).

D30 to D34 serves as a coordination point for NAD(+). The tract at residues T52–R71 is disordered. NAD(+)-binding positions include S81–L82 and E106. K108 functions as the N6-AMP-lysine intermediate in the catalytic mechanism. Residues R129, E169, K285, and K309 each coordinate NAD(+). The Zn(2+) site is built by C403, C406, C422, and C428. One can recognise a BRCT domain in the interval V599–T688. The interval E676–D695 is disordered. A compositionally biased stretch (low complexity) spans A679–D695.

The protein belongs to the NAD-dependent DNA ligase family. LigA subfamily. Requires Mg(2+) as cofactor. Mn(2+) serves as cofactor.

It carries out the reaction NAD(+) + (deoxyribonucleotide)n-3'-hydroxyl + 5'-phospho-(deoxyribonucleotide)m = (deoxyribonucleotide)n+m + AMP + beta-nicotinamide D-nucleotide.. Its function is as follows. DNA ligase that catalyzes the formation of phosphodiester linkages between 5'-phosphoryl and 3'-hydroxyl groups in double-stranded DNA using NAD as a coenzyme and as the energy source for the reaction. It is essential for DNA replication and repair of damaged DNA. The polypeptide is DNA ligase (Corynebacterium jeikeium (strain K411)).